The following is a 961-amino-acid chain: Valine--tRNA ligase (961 aa).

The short motif at 48–58 (PNVTGSLHMGH) is the 'HIGH' region element. The 'KMSKS' region signature appears at 560–564 (KMSKS). ATP is bound at residue K563. A coiled-coil region spans residues 892 to 961 (FINKDTELAR…QAQFKAIEAL (70 aa)).

Belongs to the class-I aminoacyl-tRNA synthetase family. ValS type 1 subfamily. In terms of assembly, monomer.

It localises to the cytoplasm. It catalyses the reaction tRNA(Val) + L-valine + ATP = L-valyl-tRNA(Val) + AMP + diphosphate. Catalyzes the attachment of valine to tRNA(Val). As ValRS can inadvertently accommodate and process structurally similar amino acids such as threonine, to avoid such errors, it has a 'posttransfer' editing activity that hydrolyzes mischarged Thr-tRNA(Val) in a tRNA-dependent manner. The sequence is that of Valine--tRNA ligase from Haemophilus ducreyi (strain 35000HP / ATCC 700724).